The primary structure comprises 394 residues: 1-deoxy-D-xylulose 5-phosphate reductoisomerase (394 aa).

7 residues coordinate NADPH: threonine 12, glycine 13, serine 14, isoleucine 15, glycine 38, asparagine 41, and asparagine 132. Lysine 133 contributes to the 1-deoxy-D-xylulose 5-phosphate binding site. Glutamate 134 provides a ligand contact to NADPH. Aspartate 156 is a binding site for Mn(2+). 1-deoxy-D-xylulose 5-phosphate contacts are provided by serine 157, glutamate 158, serine 182, and histidine 205. A Mn(2+)-binding site is contributed by glutamate 158. Glycine 211 contributes to the NADPH binding site. 4 residues coordinate 1-deoxy-D-xylulose 5-phosphate: serine 218, asparagine 223, lysine 224, and glutamate 227. Glutamate 227 provides a ligand contact to Mn(2+).

It belongs to the DXR family. Requires Mg(2+) as cofactor. Mn(2+) is required as a cofactor.

The enzyme catalyses 2-C-methyl-D-erythritol 4-phosphate + NADP(+) = 1-deoxy-D-xylulose 5-phosphate + NADPH + H(+). It participates in isoprenoid biosynthesis; isopentenyl diphosphate biosynthesis via DXP pathway; isopentenyl diphosphate from 1-deoxy-D-xylulose 5-phosphate: step 1/6. Catalyzes the NADPH-dependent rearrangement and reduction of 1-deoxy-D-xylulose-5-phosphate (DXP) to 2-C-methyl-D-erythritol 4-phosphate (MEP). This is 1-deoxy-D-xylulose 5-phosphate reductoisomerase from Pseudarthrobacter chlorophenolicus (strain ATCC 700700 / DSM 12829 / CIP 107037 / JCM 12360 / KCTC 9906 / NCIMB 13794 / A6) (Arthrobacter chlorophenolicus).